The chain runs to 2273 residues: Acetyl-CoA carboxylase, mitochondrial (2273 aa).

Residues 1 to 104 (KGKTITHGQS…RGNIHKHTRL (104 aa)) constitute a mitochondrion transit peptide. The region spanning 134-635 (VISKILIANN…STGWLDDLIL (502 aa)) is the Biotin carboxylation domain. The ATP-grasp domain maps to 292 to 484 (KTNFVSVPDD…LPATQLQIAM (193 aa)). Residue 332 to 337 (GGGGKG) participates in ATP binding. Residue Arg-459 is part of the active site. Positions 763 to 837 (LEAELNPTQV…EAGDVIAKLT (75 aa)) constitute a Biotinyl-binding domain. Position 804 is an N6-biotinyllysine (Lys-804). The region spanning 1532-1867 (PYSVKDWLQP…KRDMSPPLLE (336 aa)) is the CoA carboxyltransferase N-terminal domain. The segment at 1532–2187 (PYSVKDWLQP…EGQVIKRLQK (656 aa)) is carboxyltransferase. Residues Arg-1776, Lys-2080, and Arg-2082 each coordinate CoA. The CoA carboxyltransferase C-terminal domain maps to 1871-2187 (RWDRDVDFKP…EGQVIKRLQK (317 aa)).

Biotin serves as cofactor.

The protein localises to the mitochondrion. It carries out the reaction hydrogencarbonate + acetyl-CoA + ATP = malonyl-CoA + ADP + phosphate + H(+). The enzyme catalyses N(6)-biotinyl-L-lysyl-[protein] + hydrogencarbonate + ATP = N(6)-carboxybiotinyl-L-lysyl-[protein] + ADP + phosphate + H(+). It functions in the pathway lipid metabolism; malonyl-CoA biosynthesis; malonyl-CoA from acetyl-CoA: step 1/1. In terms of biological role, catalyzes the rate-limiting reaction in the mitochondrial fatty acid synthesis (FAS) type II pathway. Responsible for the production of the mitochondrial malonyl-CoA, used for the biosynthesis of the cofactor lipoic acid. This protein carries three functions: biotin carboxyl carrier protein, biotin carboxylase, and carboxyltransferase. This Saccharomyces cerevisiae (strain Lalvin EC1118 / Prise de mousse) (Baker's yeast) protein is Acetyl-CoA carboxylase, mitochondrial (HFA1).